The chain runs to 352 residues: Ion-translocating oxidoreductase complex subunit D (352 aa).

Helical transmembrane passes span 20–40 (IMLL…WFFG), 42–62 (GTLV…ALVL), 89–109 (IPPL…VIIA), and 123–143 (PAMI…TSWL). Thr-187 carries the FMN phosphoryl threonine modification. The next 5 helical transmembrane spans lie at 214-234 (ILAG…GVWL), 242-262 (WHIP…GWLF), 267-287 (LAAP…FFIL), 301-321 (LIFG…GGYP), and 322-342 (DGVA…DYYT).

Belongs to the NqrB/RnfD family. In terms of assembly, the complex is composed of six subunits: RsxA, RsxB, RsxC, RsxD, RsxE and RsxG. FMN serves as cofactor.

It localises to the cell inner membrane. In terms of biological role, part of a membrane-bound complex that couples electron transfer with translocation of ions across the membrane. Required to maintain the reduced state of SoxR. In Escherichia coli O81 (strain ED1a), this protein is Ion-translocating oxidoreductase complex subunit D.